Here is a 156-residue protein sequence, read N- to C-terminus: Protein OXIDATIVE STRESS 3 LIKE 3 (156 aa).

Positions 1–67 (MHYQEQMESL…GLSKHYKGKS (67 aa)) are disordered. Basic and acidic residues predominate over residues 13–26 (GEERRRGNYTRDVD).

It localises to the nucleus. In terms of biological role, promotes slightly the tolerance to oxidizing chemicals (e.g. diamide). This chain is Protein OXIDATIVE STRESS 3 LIKE 3, found in Arabidopsis thaliana (Mouse-ear cress).